The following is a 104-amino-acid chain: Putative zinc finger protein ORF104b (104 aa).

The segment at 62-85 (YECKYCHTRYLSHTGIVYHLEREH) adopts a C2H2-type zinc-finger fold.

The protein is Putative zinc finger protein ORF104b of Acidianus sp. F28 (AFV-2).